Consider the following 90-residue polypeptide: Molybdopterin synthase sulfur carrier subunit (90 aa).

Residue Gly90 is modified to 1-thioglycine; alternate. A Glycyl adenylate; alternate modification is found at Gly90.

This sequence belongs to the MoaD family. MOCS2A subfamily. As to quaternary structure, heterotetramer; composed of 2 small (Mocs2A) and 2 large (Mocs2B) subunits. In terms of processing, C-terminal thiocarboxylation occurs in 2 steps, it is first acyl-adenylated (-COAMP) via the hesA/moeB/thiF part of MOCS3, then thiocarboxylated (-COSH) via the rhodanese domain of MOCS3.

The protein resides in the cytoplasm. It participates in cofactor biosynthesis; molybdopterin biosynthesis. Its function is as follows. Acts as a sulfur carrier required for molybdopterin biosynthesis. Component of the molybdopterin synthase complex that catalyzes the conversion of precursor Z into molybdopterin by mediating the incorporation of 2 sulfur atoms into precursor Z to generate a dithiolene group. In the complex, serves as sulfur donor by being thiocarboxylated (-COSH) at its C-terminus by MOCS3. After interaction with Mocs2B, the sulfur is then transferred to precursor Z to form molybdopterin. The protein is Molybdopterin synthase sulfur carrier subunit of Drosophila ananassae (Fruit fly).